An 89-amino-acid chain; its full sequence is UPF0223 protein BCA_4066 (89 aa).

Belongs to the UPF0223 family.

This chain is UPF0223 protein BCA_4066, found in Bacillus cereus (strain 03BB102).